The chain runs to 426 residues: Histidine--tRNA ligase (426 aa).

This sequence belongs to the class-II aminoacyl-tRNA synthetase family. Homodimer.

The protein localises to the cytoplasm. The enzyme catalyses tRNA(His) + L-histidine + ATP = L-histidyl-tRNA(His) + AMP + diphosphate + H(+). This chain is Histidine--tRNA ligase, found in Streptococcus pyogenes serotype M28 (strain MGAS6180).